The primary structure comprises 155 residues: 2-C-methyl-D-erythritol 2,4-cyclodiphosphate synthase (155 aa).

Residues Asp-8 and His-10 each contribute to the a divalent metal cation site. Residues 8-10 and 34-35 contribute to the 4-CDP-2-C-methyl-D-erythritol 2-phosphate site; these read DVH and HS. His-42 contributes to the a divalent metal cation binding site. 4-CDP-2-C-methyl-D-erythritol 2-phosphate contacts are provided by residues 56-58, 61-65, 132-135, and Arg-142; these read DIG, FPDKD, and TTTE.

This sequence belongs to the IspF family. In terms of assembly, homotrimer. Requires a divalent metal cation as cofactor.

It catalyses the reaction 4-CDP-2-C-methyl-D-erythritol 2-phosphate = 2-C-methyl-D-erythritol 2,4-cyclic diphosphate + CMP. Its pathway is isoprenoid biosynthesis; isopentenyl diphosphate biosynthesis via DXP pathway; isopentenyl diphosphate from 1-deoxy-D-xylulose 5-phosphate: step 4/6. Functionally, involved in the biosynthesis of isopentenyl diphosphate (IPP) and dimethylallyl diphosphate (DMAPP), two major building blocks of isoprenoid compounds. Catalyzes the conversion of 4-diphosphocytidyl-2-C-methyl-D-erythritol 2-phosphate (CDP-ME2P) to 2-C-methyl-D-erythritol 2,4-cyclodiphosphate (ME-CPP) with a corresponding release of cytidine 5-monophosphate (CMP). The polypeptide is 2-C-methyl-D-erythritol 2,4-cyclodiphosphate synthase (Desulfatibacillum aliphaticivorans).